The following is a 217-amino-acid chain: 25 kDa ookinete surface antigen (217 aa).

A signal peptide spans 1–16; it reads MNKLYSLFLFLFIQLS. The 30-residue stretch at 30–59 folds into the EGF-like 1; truncated domain; the sequence is CKKGFLIQMSGHLECKCENDLVLVNEETCE. EGF-like domains follow at residues 61–106, 106–150, and 153–193; these read KVLK…NVCI, ILNE…NKCS, and GETK…STCT. Cystine bridges form between C65/C80, C74/C92, C94/C105, C110/C120, C115/C133, C135/C149, C157/C168, C161/C177, and C179/C192. N112 carries N-linked (GlcNAc...) asparagine glycosylation. Residues N165 and N187 are each glycosylated (N-linked (GlcNAc...) asparagine). S196 carries the GPI-anchor amidated serine lipid modification. Positions 197–217 are cleaved as a propeptide — removed in mature form; that stretch reads VYNILNLSLIFVLFSVCFFIM. N202 carries an N-linked (GlcNAc...) asparagine glycan.

It localises to the cell membrane. The sequence is that of 25 kDa ookinete surface antigen from Plasmodium reichenowi.